The chain runs to 409 residues: MKAEILCVGTELLLGDIVNTNAQYISKELANIGIEVYHHSVIGDNENRLLKELERAFNYCDLVITTGGLGPTKDDLTKESVAKFFQEDLVLHEKSLKQIEKRLLCFNKSMTESNKKQAYFPKNCEILENPNGTAPGFIIEKDNKIAIILPGPPYEMQPMFENKVIPYLEKLTSSTIKSKVLRITGIGESDVADLISDILENQTNPTVAPYAKQGETTLRITAKANSEEKALNLIVPIEKKIRQILEDNIYGSGETSLEEVVANILVKRNLTIATAESCTGGLLAGKLINFPGISSVFLEGAITYSNESKINRLNVKKETLEKYTAVSKEVALEMAEGIAKSAGTNIGISTTGVAGPGGGTYDKPIGLIYIGLYINGKTFVKELNYSGNRQFIRNITVTRALDFLRRNLK.

It belongs to the CinA family.

This chain is Putative competence-damage inducible protein, found in Clostridium botulinum (strain ATCC 19397 / Type A).